The sequence spans 418 residues: MSSAQREFEIVLYGATGFSGMLTGQHLAQRDTNARIALAGRSPQRLRAVRDKLGPLASDWPLVVADASQPATLEEMATRAQVILTTVGPYTRYGLPLVAACAKAGTDYADLTGELMFCRNSIDLYHKQAADTGARIVLACGFDSIPSDLNVHHLYRRAAEDGTGELAETNLVLRSFSQRWASGGSVATYSEAMRTASSDPEAYRLVNDPYTLTTDRSAEPDLGPQPDFSMRRGRDLAPELAGFWTGAFVQGPFNTRIVRRSNALQDWAYGKQFRYSETMSLGRSFAAPIASAAVTGAIAGGIGLGNKYFSRLPQRALERVTPKPGTGPSQKSRERGHYRCETYTTTTTGARYLATFAHNVDAYASTAVLLGESGLALALDRDRLSELRGVLTPAAAMGDALLARLPQTGVVVSATRLH.

It belongs to the saccharopine dehydrogenase family. Enoyl reductase subfamily.

In terms of biological role, involved in the reduction of the double bond between C-4 and C-5 during phthiocerol dimycocerosates (DIM A) and glycosylated phenolphthiocerol dimycocerosates (PGL) biosynthesis. The chain is Trans-acting enoyl reductase from Mycobacterium ulcerans (strain Agy99).